The primary structure comprises 465 residues: MGSKTPNDHRRGPNVESSPHAAIDTINPPKHAAASGLLHGPLEGETEDGEDEDDDKTGADLKSVGQLNNSTKKKNKRKKNKKKKKTLLGGLQTTPPRVALSSIFYDQRYPEAEIVGYTTNNDNLQRITAEEFRHLCVVNDMDDEFLNDYRKAAEVHRQVRQYVQTITKPGIAMSQLAQEIEDGVRALTDHQGIETGDALKAGMAFPTGLCLNNIGAHWTPNPGAKEVILQYDDVLKVDFGVHVNGRIVDSAYTMAFNPVYDDLLTAVKAATNTGLKEAGIDARIDCISEAIQEVMESYEVELNRKIIPVKAVRNITGHNILRYKIHGDKQVPFVKTHTNQRMEEGDIFAIETFGSTGKAYLDDDIGIYGYFCDEHASAAGLHHSSAKSLLKTIKDNFGTLVFSRRYLERLGVKSYHLGMRSLVSKGIVQSYAPLVDVPGSYVAQFEHTVLLRPNCKEVISRGDDY.

Residues 1–13 (MGSKTPNDHRRGP) show a composition bias toward basic and acidic residues. A disordered region spans residues 1–92 (MGSKTPNDHR…KKKTLLGGLQ (92 aa)). Residues 44–55 (GETEDGEDEDDD) are compositionally biased toward acidic residues. Residues 71-86 (TKKKNKRKKNKKKKKT) are compositionally biased toward basic residues. Substrate is bound at residue His217. 3 residues coordinate a divalent metal cation: Asp238, Asp249, and His318. His326 contacts substrate. Residues Glu351 and Glu446 each contribute to the a divalent metal cation site.

This sequence belongs to the peptidase M24A family. Methionine aminopeptidase eukaryotic type 2 subfamily. The cofactor is Co(2+). Zn(2+) serves as cofactor. Mn(2+) is required as a cofactor. Requires Fe(2+) as cofactor.

It localises to the cytoplasm. The enzyme catalyses Release of N-terminal amino acids, preferentially methionine, from peptides and arylamides.. In terms of biological role, cotranslationally removes the N-terminal methionine from nascent proteins. The N-terminal methionine is often cleaved when the second residue in the primary sequence is small and uncharged (Met-Ala-, Cys, Gly, Pro, Ser, Thr, or Val). The polypeptide is Methionine aminopeptidase 2-2 (Ajellomyces dermatitidis (strain ER-3 / ATCC MYA-2586) (Blastomyces dermatitidis)).